Here is a 1217-residue protein sequence, read N- to C-terminus: Splicing factor 3B subunit 3 (1217 aa).

Interaction with PHF5A, SF3B1 and SF3B5 stretches follow at residues 105 to 119 (ETFG…VPGQ) and 145 to 168 (NRDA…TLVY). Phosphoserine is present on Ser156. 2 interaction with SF3B1 and SF3B5 regions span residues 193–231 (DNDP…LEEH) and 786–804 (RKFV…ETDH). The tract at residues 1028–1049 (TYPRWVTTASLLDYDTVAGADK) is interaction with SF3B1. The segment at 1100–1123 (TVLSLQKTTLIPGGSESLVYTTLS) is interaction with SF3B5. A Phosphothreonine modification is found at Thr1200.

It belongs to the RSE1 family. Component of the 17S U2 SnRNP complex, a ribonucleoprotein complex that contains small nuclear RNA (snRNA) U2 and a number of specific proteins. Part of the SF3B subcomplex of the 17S U2 SnRNP complex. SF3B associates with the splicing subcomplex SF3A and a 12S RNA unit to form the U2 small nuclear ribonucleoproteins complex (U2 snRNP). Within the SF3B subcomplex, interacts directly with SF3B1 (via HEAT domain), SF3B5 and PHF5A. Identified in the spliceosome A complex; remains associated with the spliceosome throughout the splicing process. Component of the spliceosome B complex. Identified in the spliceosome C complex. Identified in the spliceosome E complex. Component of the minor (U12-type spliceosome) spliceosome. Within this complex, interacts with SCNM1. Associates with the STAGA transcription coactivator-HAT complex. Interacts with SUPT3H. Interacts with TAF3.

Its subcellular location is the nucleus. Its function is as follows. Component of the 17S U2 SnRNP complex of the spliceosome, a large ribonucleoprotein complex that removes introns from transcribed pre-mRNAs. The 17S U2 SnRNP complex (1) directly participates in early spliceosome assembly and (2) mediates recognition of the intron branch site during pre-mRNA splicing by promoting the selection of the pre-mRNA branch-site adenosine, the nucleophile for the first step of splicing. Within the 17S U2 SnRNP complex, SF3B3 is part of the SF3B subcomplex, which is required for 'A' complex assembly formed by the stable binding of U2 snRNP to the branchpoint sequence in pre-mRNA. Sequence independent binding of SF3A and SF3B subcomplexes upstream of the branch site is essential, it may anchor U2 snRNP to the pre-mRNA. May also be involved in the assembly of the 'E' complex. Also acts as a component of the minor spliceosome, which is involved in the splicing of U12-type introns in pre-mRNAs. The sequence is that of Splicing factor 3B subunit 3 (Sf3b3) from Mus musculus (Mouse).